A 96-amino-acid polypeptide reads, in one-letter code: MSAMQVDVVYALPERQYLRTVKLEEGSTVEQAIVASGLLELRHDIDLQVNKVGIYSRAAKLADVVQDGDRVEIYRPLIADPKELRRQRAERSKSKP.

The protein belongs to the UPF0125 (RnfH) family.

The protein is Protein RnfH of Pectobacterium carotovorum subsp. carotovorum (strain PC1).